A 112-amino-acid chain; its full sequence is Large ribosomal subunit protein eL34A (112 aa).

This sequence belongs to the eukaryotic ribosomal protein eL34 family. Component of the large ribosomal subunit (LSU). Mature yeast ribosomes consist of a small (40S) and a large (60S) subunit. The 40S small subunit contains 1 molecule of ribosomal RNA (18S rRNA) and at least 33 different proteins. The large 60S subunit contains 3 rRNA molecules (25S, 5.8S and 5S rRNA) and at least 46 different proteins.

It is found in the cytoplasm. Its function is as follows. Component of the ribosome, a large ribonucleoprotein complex responsible for the synthesis of proteins in the cell. The small ribosomal subunit (SSU) binds messenger RNAs (mRNAs) and translates the encoded message by selecting cognate aminoacyl-transfer RNA (tRNA) molecules. The large subunit (LSU) contains the ribosomal catalytic site termed the peptidyl transferase center (PTC), which catalyzes the formation of peptide bonds, thereby polymerizing the amino acids delivered by tRNAs into a polypeptide chain. The nascent polypeptides leave the ribosome through a tunnel in the LSU and interact with protein factors that function in enzymatic processing, targeting, and the membrane insertion of nascent chains at the exit of the ribosomal tunnel. The chain is Large ribosomal subunit protein eL34A (rpl3401) from Schizosaccharomyces pombe (strain 972 / ATCC 24843) (Fission yeast).